Reading from the N-terminus, the 354-residue chain is Aspartate carbamoyltransferase catalytic subunit (354 aa).

Carbamoyl phosphate is bound by residues Arg67 and Thr68. Lys95 is a binding site for L-aspartate. Carbamoyl phosphate contacts are provided by Arg117, His150, and Gln153. 2 residues coordinate L-aspartate: Arg190 and Arg261. Positions 302 and 303 each coordinate carbamoyl phosphate.

It belongs to the aspartate/ornithine carbamoyltransferase superfamily. ATCase family. Heterododecamer (2C3:3R2) of six catalytic PyrB chains organized as two trimers (C3), and six regulatory PyrI chains organized as three dimers (R2).

It catalyses the reaction carbamoyl phosphate + L-aspartate = N-carbamoyl-L-aspartate + phosphate + H(+). It participates in pyrimidine metabolism; UMP biosynthesis via de novo pathway; (S)-dihydroorotate from bicarbonate: step 2/3. In terms of biological role, catalyzes the condensation of carbamoyl phosphate and aspartate to form carbamoyl aspartate and inorganic phosphate, the committed step in the de novo pyrimidine nucleotide biosynthesis pathway. In Synechococcus sp. (strain RCC307), this protein is Aspartate carbamoyltransferase catalytic subunit.